The chain runs to 306 residues: Beta-lactamase (306 aa).

A signal peptide spans 1–36; the sequence is MKLKTKASIKFGICVGLLCLSITGFTPFFNSTHAEA. The Acyl-ester intermediate role is filled by S89. 251 to 253 is a binding site for substrate; the sequence is KSG.

The protein belongs to the class-A beta-lactamase family.

The protein localises to the secreted. It carries out the reaction a beta-lactam + H2O = a substituted beta-amino acid. In terms of biological role, this protein is a beta-lactamase with a substrate specificity for penicillins. This chain is Beta-lactamase (penP), found in Bacillus subtilis (strain 168).